The primary structure comprises 60 residues: Mastoparan-VT3 (60 aa).

Residues M1–A27 form the signal peptide. AXPX repeat units follow at residues A27–K30, A31–L34, A35–N38, and A41–E44. Residues D28–A45 constitute a propeptide that is removed on maturation. The residue at position 59 (L59) is a Leucine amide.

Belongs to the MCD family. Mastoparan subfamily. Expressed by the venom gland.

The protein resides in the secreted. The synthetic peptide shows antimicrobial activities against Gram-negative bacteria (but not against all strains tested), Gram-positive bacteria (all strains tested) and the fungi C.albicans and C.parapsilosis. Exhibits moderate hemolytic activity (25% at 100 ug/ml) against washed human erythrocytes. This Vespa tropica (Greater banded hornet) protein is Mastoparan-VT3.